A 2066-amino-acid polypeptide reads, in one-letter code: Kinesin-like protein KIN-12C (2066 aa).

2 disordered regions span residues 1–41 (MSRN…SQIQ) and 59–116 (RAQH…RVSL). Over residues 20–33 (SLSLFSPSRPPLNS) the composition is skewed to low complexity. Positions 67 to 76 (GPEKKFEVLE) are enriched in basic and acidic residues. A compositionally biased stretch (polar residues) spans 99 to 109 (EPNSAQSTPTR). Positions 168 to 505 (NVQVLIRLRP…LKFAQRAKLI (338 aa)) constitute a Kinesin motor domain. 249 to 256 (GQTGSGKT) lines the ATP pocket. Microtubules-binding regions lie at residues 375-379 (SSRSH), 406-412 (VDLAGSE), and 454-458 (HVPYR). Coiled-coil stretches lie at residues 1521-1618 (DLKT…VDEI) and 1650-1772 (KIYA…EILL). Disordered regions lie at residues 1803–1823 (SAAE…RGSS) and 2043–2066 (KYRK…TRYR). Positions 1905–2051 (VQRVVEKAQQ…AKYRKTSNNH (147 aa)) form a coiled coil. The segment covering 2047–2066 (TSNNHPSTRTQGQSSGTRYR) has biased composition (polar residues).

The protein belongs to the TRAFAC class myosin-kinesin ATPase superfamily. Kinesin family. KIN-12 subfamily. As to quaternary structure, interacts with TAN. Interacts with RANGAP1. As to expression, expressed in tissues enriched in dividing cells, such as root meristems, root primordia, and leaf primordia/young leaves.

It localises to the cytoplasm. The protein resides in the cytoskeleton. The protein localises to the phragmoplast. Involved in the spatial control of cytokinesis by a proper phragmoplast guidance. Localizes TAN to the cortical division sites (CDS) during cytokinesis via direct binding. This is Kinesin-like protein KIN-12C from Arabidopsis thaliana (Mouse-ear cress).